Here is a 160-residue protein sequence, read N- to C-terminus: SsrA-binding protein (160 aa).

A disordered region spans residues 131–160; the sequence is KKEYDKRHTERERDSDRELQRAVRSKGKDD.

Belongs to the SmpB family.

Its subcellular location is the cytoplasm. In terms of biological role, required for rescue of stalled ribosomes mediated by trans-translation. Binds to transfer-messenger RNA (tmRNA), required for stable association of tmRNA with ribosomes. tmRNA and SmpB together mimic tRNA shape, replacing the anticodon stem-loop with SmpB. tmRNA is encoded by the ssrA gene; the 2 termini fold to resemble tRNA(Ala) and it encodes a 'tag peptide', a short internal open reading frame. During trans-translation Ala-aminoacylated tmRNA acts like a tRNA, entering the A-site of stalled ribosomes, displacing the stalled mRNA. The ribosome then switches to translate the ORF on the tmRNA; the nascent peptide is terminated with the 'tag peptide' encoded by the tmRNA and targeted for degradation. The ribosome is freed to recommence translation, which seems to be the essential function of trans-translation. The protein is SsrA-binding protein of Pseudomonas syringae pv. syringae (strain B728a).